The chain runs to 211 residues: Endoplasmic reticulum vesicle protein 25 (211 aa).

Positions methionine 1–alanine 19 are cleaved as a signal peptide. Topologically, residues leucine 20–lysine 180 are lumenal. In terms of domain architecture, GOLD spans proline 33 to isoleucine 121. Residues phenylalanine 181–leucine 201 traverse the membrane as a helical segment. Residues arginine 202–isoleucine 211 lie on the Cytoplasmic side of the membrane.

Belongs to the EMP24/GP25L family.

The protein resides in the endoplasmic reticulum membrane. It localises to the golgi apparatus membrane. Its function is as follows. Constituent of COPII-coated endoplasmic reticulum-derived transport vesicles. Required for efficient transport of a subset of secretory proteins to the Golgi. Facilitates retrograde transport from the Golgi to the endoplasmic reticulum. The protein is Endoplasmic reticulum vesicle protein 25 (ERV25) of Yarrowia lipolytica (strain CLIB 122 / E 150) (Yeast).